A 662-amino-acid chain; its full sequence is Sodium/glucose cotransporter 1 (662 aa).

Topologically, residues Met1–Arg24 are extracellular. A helical membrane pass occupies residues Asn25–Met47. Topologically, residues Cys48–Val66 are cytoplasmic. The helical transmembrane segment at Trp67–Thr90 threads the bilayer. Over Gly91–Gly95 the chain is Extracellular. A helical membrane pass occupies residues Ile96–Val117. Over Pro118–Lys139 the chain is Cytoplasmic. The helical transmembrane segment at Arg140–Ile169 threads the bilayer. Over Thr170–Asp176 the chain is Extracellular. Residues Leu177 to Ile193 traverse the membrane as a helical segment. Over Thr194–Tyr202 the chain is Cytoplasmic. Residues Thr203–Phe221 traverse the membrane as a helical segment. The Extracellular segment spans residues Ala222–Pro275. Asn248 carries N-linked (GlcNAc...) asparagine glycosylation. 5 cysteine pairs are disulfide-bonded: Cys255-Cys511, Cys255-Cys608, Cys345-Cys351, Cys355-Cys361, and Cys517-Cys522. Residues Trp276–Gln295 form a helical membrane-spanning segment. The Cytoplasmic portion of the chain corresponds to Val296–His309. The chain crosses the membrane as a helical span at residues Val310–Pro331. Residues Gly332 to Pro375 are Extracellular-facing. A helical transmembrane segment spans residues Asn376–Thr406. Residues Met407–Leu422 are Cytoplasmic-facing. The chain crosses the membrane as a helical span at residues Met423 to Val444. Topologically, residues Gln445–Gln451 are extracellular. The chain crosses the membrane as a helical span at residues Leu452 to Cys477. Topologically, residues Lys478–Asn481 are cytoplasmic. A helical membrane pass occupies residues Glu482–Phe504. Topologically, residues Ala505–His525 are extracellular. Residues Tyr526–Phe547 form a helical membrane-spanning segment. The Cytoplasmic segment spans residues Thr548–Val642. At Thr587 the chain carries Phosphothreonine. The helical transmembrane segment at Val643 to Tyr660 threads the bilayer. The Extracellular segment spans residues Phe661 to Ala662.

This sequence belongs to the sodium:solute symporter (SSF) (TC 2.A.21) family. In terms of processing, N-glycosylation is not necessary for the cotransporter function.

The protein resides in the apical cell membrane. The enzyme catalyses D-glucose(out) + 2 Na(+)(out) = D-glucose(in) + 2 Na(+)(in). It carries out the reaction D-galactose(out) + 2 Na(+)(out) = D-galactose(in) + 2 Na(+)(in). Enhanced by the interaction with PDZK1IP1/MAP17; but unlike SLC5A2/SGLT2, PDZK1IP1 is not essential for SLC5A1 transporter activity. Possibly modulated by cholesterol binding. Functionally, electrogenic Na(+)-coupled sugar symporter that actively transports D-glucose or D-galactose at the plasma membrane, with a Na(+) to sugar coupling ratio of 2:1. Transporter activity is driven by a transmembrane Na(+) electrochemical gradient set by the Na(+)/K(+) pump. Has a primary role in the transport of dietary monosaccharides from enterocytes to blood. Responsible for the absorption of D-glucose or D-galactose across the apical brush-border membrane of enterocytes, whereas basolateral exit is provided by GLUT2. Additionally, functions as a D-glucose sensor in enteroendocrine cells, triggering the secretion of the incretins GCG and GIP that control food intake and energy homeostasis. Together with SGLT2, functions in reabsorption of D-glucose from glomerular filtrate, playing a nonredundant role in the S3 segment of the proximal tubules. Transports D-glucose into endometrial epithelial cells, controlling glycogen synthesis and nutritional support for the embryo as well as the decidual transformation of endometrium prior to conception. Acts as a water channel enabling passive water transport in response to the osmotic gradient created upon sugar and Na(+) uptake. Has high water conductivity comparable to aquaporins and therefore is expected to play an important role in transepithelial water permeability, especially in the small intestine. The chain is Sodium/glucose cotransporter 1 (SLC5A1) from Sus scrofa (Pig).